We begin with the raw amino-acid sequence, 213 residues long: NADH-quinone oxidoreductase subunit B 1 (213 aa).

The [4Fe-4S] cluster site is built by Cys-82, Cys-83, Cys-148, and Cys-177.

This sequence belongs to the complex I 20 kDa subunit family. In terms of assembly, NDH-1 is composed of 14 different subunits. Subunits NuoB, C, D, E, F, and G constitute the peripheral sector of the complex. [4Fe-4S] cluster serves as cofactor.

It is found in the cell inner membrane. The catalysed reaction is a quinone + NADH + 5 H(+)(in) = a quinol + NAD(+) + 4 H(+)(out). NDH-1 shuttles electrons from NADH, via FMN and iron-sulfur (Fe-S) centers, to quinones in the respiratory chain. The immediate electron acceptor for the enzyme in this species is believed to be ubiquinone. Couples the redox reaction to proton translocation (for every two electrons transferred, four hydrogen ions are translocated across the cytoplasmic membrane), and thus conserves the redox energy in a proton gradient. This Koribacter versatilis (strain Ellin345) protein is NADH-quinone oxidoreductase subunit B 1.